We begin with the raw amino-acid sequence, 329 residues long: Peroxidase 17 (329 aa).

The signal sequence occupies residues 1–19 (MSLLPHLILYLTLLTVVVT). 4 disulfides stabilise this stretch: Cys-32/Cys-112, Cys-65/Cys-70, Cys-118/Cys-315, and Cys-197/Cys-229. His-63 acts as the Proton acceptor in catalysis. Residues Asp-64, Val-67, Gly-69, Asp-71, and Ser-73 each coordinate Ca(2+). Position 160 (Pro-160) interacts with substrate. Asn-165 and Asn-177 each carry an N-linked (GlcNAc...) asparagine glycan. Heme b is bound at residue His-190. Ser-191 provides a ligand contact to Ca(2+). Asn-206 and Asn-236 each carry an N-linked (GlcNAc...) asparagine glycan. Ca(2+) contacts are provided by Asp-242, Thr-244, and Asp-249.

It belongs to the peroxidase family. Classical plant (class III) peroxidase subfamily. Heme b is required as a cofactor. Requires Ca(2+) as cofactor.

The protein resides in the secreted. The protein localises to the vacuole. The catalysed reaction is 2 a phenolic donor + H2O2 = 2 a phenolic radical donor + 2 H2O. Functionally, removal of H(2)O(2), oxidation of toxic reductants, biosynthesis and degradation of lignin, suberization, auxin catabolism, response to environmental stresses such as wounding, pathogen attack and oxidative stress. These functions might be dependent on each isozyme/isoform in each plant tissue. The sequence is that of Peroxidase 17 (PER17) from Arabidopsis thaliana (Mouse-ear cress).